A 208-amino-acid chain; its full sequence is Large ribosomal subunit protein uL4 (208 aa).

Residues 44–76 (RRQGTQSTKTKSEVRGGGRKPWRQKGTGRARHG) form a disordered region. Positions 60-76 (GGRKPWRQKGTGRARHG) are enriched in basic residues.

It belongs to the universal ribosomal protein uL4 family. As to quaternary structure, part of the 50S ribosomal subunit.

In terms of biological role, one of the primary rRNA binding proteins, this protein initially binds near the 5'-end of the 23S rRNA. It is important during the early stages of 50S assembly. It makes multiple contacts with different domains of the 23S rRNA in the assembled 50S subunit and ribosome. Its function is as follows. Forms part of the polypeptide exit tunnel. In Acetivibrio thermocellus (strain ATCC 27405 / DSM 1237 / JCM 9322 / NBRC 103400 / NCIMB 10682 / NRRL B-4536 / VPI 7372) (Clostridium thermocellum), this protein is Large ribosomal subunit protein uL4.